We begin with the raw amino-acid sequence, 370 residues long: Molybdenum import ATP-binding protein ModC (370 aa).

The ABC transporter domain maps to 2–233 (SVRVDIGHRL…LDLLPAEERG (232 aa)). 31–38 (GPSGSGKT) provides a ligand contact to ATP. The Mop domain occupies 293–359 (GLSALNILPG…VKTVSFDRAN (67 aa)).

Belongs to the ABC transporter superfamily. Molybdate importer (TC 3.A.1.8) family. The complex is composed of two ATP-binding proteins (ModC), two transmembrane proteins (ModB) and a solute-binding protein (ModA).

It localises to the cell inner membrane. It catalyses the reaction molybdate(out) + ATP + H2O = molybdate(in) + ADP + phosphate + H(+). Part of the ABC transporter complex ModABC involved in molybdenum import. Responsible for energy coupling to the transport system. The protein is Molybdenum import ATP-binding protein ModC of Mesorhizobium japonicum (strain LMG 29417 / CECT 9101 / MAFF 303099) (Mesorhizobium loti (strain MAFF 303099)).